Reading from the N-terminus, the 550-residue chain is Glucose-6-phosphate isomerase (550 aa).

E356 serves as the catalytic Proton donor. Active-site residues include H387 and K515.

The protein belongs to the GPI family.

Its subcellular location is the cytoplasm. The enzyme catalyses alpha-D-glucose 6-phosphate = beta-D-fructose 6-phosphate. The protein operates within carbohydrate biosynthesis; gluconeogenesis. Its pathway is carbohydrate degradation; glycolysis; D-glyceraldehyde 3-phosphate and glycerone phosphate from D-glucose: step 2/4. Its function is as follows. Catalyzes the reversible isomerization of glucose-6-phosphate to fructose-6-phosphate. The chain is Glucose-6-phosphate isomerase from Vibrio campbellii (strain ATCC BAA-1116).